A 396-amino-acid chain; its full sequence is Argininosuccinate synthase (396 aa).

9 to 17 (AYSGGLDTS) contacts ATP. Y85 is an L-citrulline binding site. G115 is a binding site for ATP. T117, N121, and D122 together coordinate L-aspartate. N121 contributes to the L-citrulline binding site. 4 residues coordinate L-citrulline: R125, S173, E258, and Y270.

The protein belongs to the argininosuccinate synthase family. Type 1 subfamily. As to quaternary structure, homotetramer.

The protein localises to the cytoplasm. The enzyme catalyses L-citrulline + L-aspartate + ATP = 2-(N(omega)-L-arginino)succinate + AMP + diphosphate + H(+). It functions in the pathway amino-acid biosynthesis; L-arginine biosynthesis; L-arginine from L-ornithine and carbamoyl phosphate: step 2/3. The polypeptide is Argininosuccinate synthase (Streptococcus agalactiae serotype V (strain ATCC BAA-611 / 2603 V/R)).